The primary structure comprises 91 residues: MAVKIRLKRMGAKKSPFYRIVVADSRSPRDGRFIEQVGHYNPVAKPEAEVRINEELALKWLADGAKPSDTVRNLFSKAGIMEKFHNAKNAK.

It belongs to the bacterial ribosomal protein bS16 family.

In Exiguobacterium sp. (strain ATCC BAA-1283 / AT1b), this protein is Small ribosomal subunit protein bS16.